Consider the following 397-residue polypeptide: DnaJ homolog subfamily A member 1 (397 aa).

The 63-residue stretch at 6–68 (TYYDVLGVKP…KKRELYDKGG (63 aa)) folds into the J domain. The residue at position 66 (Lys66) is an N6-acetyllysine. Position 83 is a phosphoserine (Ser83). The segment at 121-205 (GATRKLALQK…CNGRKIVREK (85 aa)) adopts a CR-type zinc-finger fold. Residues Cys134, Cys137, Cys150, Cys153, Cys177, Cys180, Cys193, and Cys196 each contribute to the Zn(2+) site. 4 CXXCXGXG motif repeats span residues 134-141 (CDKCEGRG), 150-157 (CPNCRGTG), 177-184 (CMECQGHG), and 193-200 (CKSCNGRK). Phosphoserine is present on Ser335. The interval 352–397 (VEETDEMDQVELVDFDPNQERRRHYNGEAYEDDEHHPRGGVQCQTS) is disordered. The span at 353–365 (EETDEMDQVELVD) shows a compositional bias: acidic residues. The residue at position 381 (Tyr381) is a Phosphotyrosine. The residue at position 394 (Cys394) is a Cysteine methyl ester. Cys394 is lipidated: S-farnesyl cysteine. Positions 395–397 (QTS) are cleaved as a propeptide — removed in mature form.

Identified in a complex with HSPA1B and BAX. Interacts with RNF207.

It localises to the membrane. It is found in the cytoplasm. The protein resides in the microsome. Its subcellular location is the mitochondrion. The protein localises to the nucleus. It localises to the perinuclear region. In terms of biological role, co-chaperone for HSPA8/Hsc70. Plays a role in protein transport into mitochondria via its role as co-chaperone. Stimulates ATP hydrolysis, but not the folding of unfolded proteins mediated by HSPA1A (in vitro). Promotes apoptosis in response to cellular stress mediated by exposure to anisomycin or UV. Functions as co-chaperone for HSPA1B and negatively regulates the translocation of BAX from the cytosol to mitochondria in response to cellular stress, thereby protecting cells against apoptosis. This chain is DnaJ homolog subfamily A member 1 (Dnaja1), found in Mus musculus (Mouse).